The following is a 206-amino-acid chain: Triosephosphate isomerase (206 aa).

The active-site Electrophile is His76. Catalysis depends on Glu146, which acts as the Proton acceptor.

The protein belongs to the triosephosphate isomerase family. Homodimer.

It catalyses the reaction D-glyceraldehyde 3-phosphate = dihydroxyacetone phosphate. Its pathway is carbohydrate biosynthesis; gluconeogenesis. The protein operates within carbohydrate degradation; glycolysis; D-glyceraldehyde 3-phosphate from glycerone phosphate: step 1/1. The sequence is that of Triosephosphate isomerase (Tpi) from Aedes togoi (Mosquito).